The following is a 132-amino-acid chain: Small ribosomal subunit protein uS11 (132 aa).

It belongs to the universal ribosomal protein uS11 family. In terms of assembly, part of the 30S ribosomal subunit. Interacts with proteins S7 and S18. Binds to IF-3.

Functionally, located on the platform of the 30S subunit, it bridges several disparate RNA helices of the 16S rRNA. Forms part of the Shine-Dalgarno cleft in the 70S ribosome. This chain is Small ribosomal subunit protein uS11, found in Leifsonia xyli subsp. xyli (strain CTCB07).